A 1178-amino-acid polypeptide reads, in one-letter code: Mediator of RNA polymerase II transcription subunit 14 (1178 aa).

Polar residues predominate over residues Met1 to Thr12. 2 disordered regions span residues Met1–Val50 and Leu1064–Asp1178. 2 stretches are compositionally biased toward low complexity: residues Pro1074–Ala1112 and His1119–Arg1164.

The protein belongs to the Mediator complex subunit 14 family. As to quaternary structure, component of the Mediator complex.

Its subcellular location is the nucleus. Functionally, component of the Mediator complex, a coactivator involved in the regulated transcription of nearly all RNA polymerase II-dependent genes. Mediator functions as a bridge to convey information from gene-specific regulatory proteins to the basal RNA polymerase II transcription machinery. Mediator is recruited to promoters by direct interactions with regulatory proteins and serves as a scaffold for the assembly of a functional preinitiation complex with RNA polymerase II and the general transcription factors. This Chaetomium globosum (strain ATCC 6205 / CBS 148.51 / DSM 1962 / NBRC 6347 / NRRL 1970) (Soil fungus) protein is Mediator of RNA polymerase II transcription subunit 14 (RGR1).